Reading from the N-terminus, the 335-residue chain is MRGSVIGSGSFGTALANVLAVNCEEVRLWGRESSVVEAINTQHENPTYLKGIPISERVRATNDLQEALVGSELVVLATPSHATREVVAKAQAYLPRHVPIVTVSKGIENGTLLTMTELLEDCLPEEFHPYLAVLSGPSFAKELARRMPTVVTIASHWDKVALRCQKALQTETFRSYTSTDVVGVQYGGALKNVIAIAAGMADGLGMGHNARAAIITRGLAEITRLAVRKGANPLTLSGLSGMGDLVLTCTGELSRNRHVGMELGKGRKLPDILADMKEVAEGVKTARSAHELELKTGVELPICHQVYLIAHEGKSARTAVVDLMTRQPKSELAGV.

The NADPH site is built by Ser-10, Phe-11, Arg-31, and Lys-105. Sn-glycerol 3-phosphate contacts are provided by Lys-105, Gly-136, and Ser-138. NADPH is bound at residue Ala-140. Sn-glycerol 3-phosphate-binding residues include Lys-191, Asp-244, Ser-254, Arg-255, and Asn-256. The active-site Proton acceptor is the Lys-191. Arg-255 serves as a coordination point for NADPH. Residues Val-279 and Glu-281 each coordinate NADPH.

It belongs to the NAD-dependent glycerol-3-phosphate dehydrogenase family.

The protein resides in the cytoplasm. It catalyses the reaction sn-glycerol 3-phosphate + NAD(+) = dihydroxyacetone phosphate + NADH + H(+). The catalysed reaction is sn-glycerol 3-phosphate + NADP(+) = dihydroxyacetone phosphate + NADPH + H(+). It functions in the pathway membrane lipid metabolism; glycerophospholipid metabolism. In terms of biological role, catalyzes the reduction of the glycolytic intermediate dihydroxyacetone phosphate (DHAP) to sn-glycerol 3-phosphate (G3P), the key precursor for phospholipid synthesis. The chain is Glycerol-3-phosphate dehydrogenase [NAD(P)+] from Myxococcus xanthus (strain DK1622).